The following is a 150-amino-acid chain: Deoxyuridine 5'-triphosphate nucleotidohydrolase (150 aa).

Residues 69–71 (RSG), Asn-82, 86–88 (LID), and Met-96 each bind substrate.

This sequence belongs to the dUTPase family. Mg(2+) is required as a cofactor.

It catalyses the reaction dUTP + H2O = dUMP + diphosphate + H(+). It functions in the pathway pyrimidine metabolism; dUMP biosynthesis; dUMP from dCTP (dUTP route): step 2/2. This enzyme is involved in nucleotide metabolism: it produces dUMP, the immediate precursor of thymidine nucleotides and it decreases the intracellular concentration of dUTP so that uracil cannot be incorporated into DNA. The polypeptide is Deoxyuridine 5'-triphosphate nucleotidohydrolase (Acinetobacter baylyi (strain ATCC 33305 / BD413 / ADP1)).